Consider the following 959-residue polypeptide: Probable transport protein MmpL4 (959 aa).

A run of 11 helical transmembrane segments spans residues 25–45 (FAVPIILVWLAIAVTVSVFIP), 205–225 (VIVILVTLLLVYRSFITVILL), 239–259 (VVALLGHTGLIGLSTFAVNLL), 300–320 (FHVILGSGLTISGATFCLSFA), 333–353 (AVGMLIAVAVALTLGPAVLTV), 381–401 (WPLPILITTCAIAMVGLLALP), 766–786 (WDLVIAGISSLCLIFIIMLII), 790–810 (FVAAAVIVGTVALSLGASFGL), 818–838 (ILGIELHYLVLAMSVIVLLAV), 872–892 (VVTNAGLVFAFTMASMVVSDL), and 902–922 (IGLGLLFDTLIVRSFMMPSIA).

Belongs to the resistance-nodulation-cell division (RND) (TC 2.A.6) family. MmpL subfamily.

It is found in the cell membrane. This chain is Probable transport protein MmpL4 (mmpL4), found in Mycobacterium leprae (strain TN).